Consider the following 304-residue polypeptide: Chromo domain-containing protein cec-1 (304 aa).

The Chromo domain occupies 8–66 (YTVESILEHRKKKGKSEFYIKWLGYDHTHNSWEPKENIVDPTLIEAFFTREAARKAEIK). The span at 63-73 (AEIKAKKDKMA) shows a compositional bias: basic and acidic residues. Disordered stretches follow at residues 63-235 (AEIK…EIQL) and 248-304 (VEPA…AIIE). Residues 75 to 102 (GKKGASSKASASVSKASASTPARGAKAA) are compositionally biased toward low complexity. The span at 106–116 (PPKKSPPKRQR) shows a compositional bias: basic residues. Over residues 122 to 141 (IRPDSDTDEEHSSADKKSKA) the composition is skewed to basic and acidic residues. 3 stretches are compositionally biased toward acidic residues: residues 142-152 (EDEEEVEDDEE), 163-204 (EEPE…DVQL), and 212-233 (EEEEEKVEEKKEEEEEEEEEEI). The span at 248-292 (VEPAVATPEPSEPSSSEKAVVENGSSSAAAGNSASKPEVSAVEVV) shows a compositional bias: low complexity. Acidic residues predominate over residues 293–304 (TVEDDDDIAIIE).

It localises to the nucleus. The protein localises to the chromosome. This Caenorhabditis elegans protein is Chromo domain-containing protein cec-1 (cec-1).